Here is a 1142-residue protein sequence, read N- to C-terminus: SNF1-activating kinase 1 (1142 aa).

A disordered region spans residues 22–41 (ELEKSGTSSSVSLRSPTKSS). Residue threonine 43 is modified to Phosphothreonine. The segment covering 82 to 93 (QHQQHISSSLAK) has biased composition (polar residues). Positions 82–107 (QHQQHISSSLAKTPTTTSSFCSSGSS) are disordered. The span at 94–107 (TPTTTSSFCSSGSS) shows a compositional bias: low complexity. Residues 133-448 (YEIIKELGHG…IPAIKKHPFV (316 aa)) form the Protein kinase domain. Residues 139 to 147 (LGHGQHGKV) and lysine 162 contribute to the ATP site. Aspartate 277 serves as the catalytic Proton acceptor. 6 disordered regions span residues 634-678 (SPEA…VLPQ), 694-799 (NSLL…NSPI), 825-875 (SHFN…AYSE), 919-971 (KSSL…QKGS), 1005-1027 (SQPISKPGPLVLPKRLDQKKATT), and 1066-1142 (STNA…SALP). Positions 640-656 (SVSSVPNLPSAPSSTRL) are enriched in polar residues. A compositionally biased stretch (low complexity) spans 694-706 (NSLLRNSSSHLTS). The span at 707–741 (YNSGRPSSRTGRMNSRNQNLPKIPNSLSKISTTKL) shows a compositional bias: polar residues. Positions 742–751 (TELRVPKDSE) are enriched in basic and acidic residues. Residues 785–799 (NINSSDKSGSKNSPI) show a composition bias toward polar residues. Low complexity-rich tracts occupy residues 835–868 (SSQSSVTSSGSESDSELSSTSSSCTSGTQSRNSS) and 920–936 (SSLNLEPPSVSSSSSSS). The segment covering 958-971 (SKLSELSNSPQKGS) has biased composition (polar residues). At serine 964 the chain carries Phosphoserine. Residues 1096-1111 (NDEHARNTSCHGDKGQ) show a composition bias toward basic and acidic residues. Residue serine 1126 is modified to Phosphoserine. Residues 1133–1142 (NEEKRRSALP) are compositionally biased toward basic and acidic residues.

Belongs to the protein kinase superfamily. Ser/Thr protein kinase family. In terms of assembly, associates with the SNF1 kinase complex. Interacts with SNF1 and REG1. Autophosphorylated.

It localises to the cytoplasm. It catalyses the reaction L-seryl-[protein] + ATP = O-phospho-L-seryl-[protein] + ADP + H(+). It carries out the reaction L-threonyl-[protein] + ATP = O-phospho-L-threonyl-[protein] + ADP + H(+). Functionally, serine/threonine-protein kinase that phosphorylates SNF1, the catalytic subunit of the SNF1 kinase complex. Acts as an activator of the SNF1 kinase complex and controls its nuclear localization upon glucose and nitrogen depletion. Also required for SNF1 kinase activation under other stress conditions like alkaline pH or presence of cadmium. The sequence is that of SNF1-activating kinase 1 (SAK1) from Saccharomyces cerevisiae (strain ATCC 204508 / S288c) (Baker's yeast).